A 329-amino-acid chain; its full sequence is Beta-ketoacyl-[acyl-carrier-protein] synthase III (329 aa).

Catalysis depends on residues Cys-123 and His-256. Residues 257 to 261 (QANIR) are ACP-binding. The active site involves Asn-286.

The protein belongs to the thiolase-like superfamily. FabH family. In terms of assembly, homodimer.

Its subcellular location is the cytoplasm. The catalysed reaction is malonyl-[ACP] + acetyl-CoA + H(+) = 3-oxobutanoyl-[ACP] + CO2 + CoA. It functions in the pathway lipid metabolism; fatty acid biosynthesis. Its function is as follows. Catalyzes the condensation reaction of fatty acid synthesis by the addition to an acyl acceptor of two carbons from malonyl-ACP. Catalyzes the first condensation reaction which initiates fatty acid synthesis and may therefore play a role in governing the total rate of fatty acid production. Possesses both acetoacetyl-ACP synthase and acetyl transacylase activities. Its substrate specificity determines the biosynthesis of branched-chain and/or straight-chain of fatty acids. The protein is Beta-ketoacyl-[acyl-carrier-protein] synthase III of Burkholderia orbicola (strain AU 1054).